Consider the following 129-residue polypeptide: Protein Turandot A (129 aa).

The N-terminal stretch at 1 to 21 (MNSSTALMCFALLLISPLCMG) is a signal peptide. N-linked (GlcNAc...) asparagine glycosylation occurs at Asn49.

It belongs to the Turandot family. As to expression, expressed in the fat body (at protein level).

It localises to the secreted. Functionally, a humoral factor that plays a role in stress tolerance; gives increased resistance to the lethal effects of bacterial challenge and stress. Regulated by the JAK/STAT pathway and NF-KB-like Relish pathway in the fat body, upd3 in the hemocytes and Mekk1 in response to septic injury and consequent immune response. The polypeptide is Protein Turandot A (Drosophila melanogaster (Fruit fly)).